We begin with the raw amino-acid sequence, 120 residues long: Large ribosomal subunit protein uL18 (120 aa).

It belongs to the universal ribosomal protein uL18 family. As to quaternary structure, part of the 50S ribosomal subunit; part of the 5S rRNA/L5/L18/L25 subcomplex. Contacts the 5S and 23S rRNAs.

Its function is as follows. This is one of the proteins that bind and probably mediate the attachment of the 5S RNA into the large ribosomal subunit, where it forms part of the central protuberance. This chain is Large ribosomal subunit protein uL18, found in Bacillus cereus (strain ATCC 10987 / NRS 248).